The following is a 511-amino-acid chain: Cytochrome P450 714C3 (511 aa).

Topologically, residues 1-6 (MEKLLA) are lumenal. A helical; Signal-anchor for type III membrane protein transmembrane segment spans residues 7–27 (LIVVLVILLSLALFYLCNILW). Residues 28–511 (LRAVKIRKKL…GLPLMVTKLP (484 aa)) lie on the Cytoplasmic side of the membrane. Cys458 provides a ligand contact to heme.

The protein belongs to the cytochrome P450 family. The cofactor is heme.

The protein localises to the membrane. The polypeptide is Cytochrome P450 714C3 (CYP714C3) (Oryza sativa subsp. japonica (Rice)).